Consider the following 263-residue polypeptide: Metaxin-2 (263 aa).

S2 carries the N-acetylserine modification.

Belongs to the metaxin family. Interacts with MTX1/metaxin-1. Associates with the mitochondrial contact site and cristae organizing system (MICOS) complex, composed of at least MICOS10/MIC10, CHCHD3/MIC19, CHCHD6/MIC25, APOOL/MIC27, IMMT/MIC60, APOO/MIC23/MIC26 and QIL1/MIC13. This complex was also known under the names MINOS or MitOS complex. The MICOS complex associates with mitochondrial outer membrane proteins SAMM50, MTX1 and MTX2 (together described as components of the mitochondrial outer membrane sorting assembly machinery (SAM) complex) and DNAJC11, mitochondrial inner membrane protein TMEM11 and with HSPA9. The MICOS and SAM complexes together with DNAJC11 are part of a large protein complex spanning both membranes termed the mitochondrial intermembrane space bridging (MIB) complex.

The protein resides in the mitochondrion outer membrane. The protein localises to the mitochondrion. Involved in transport of proteins into the mitochondrion. This chain is Metaxin-2 (MTX2), found in Homo sapiens (Human).